The following is a 493-amino-acid chain: Glutamyl-tRNA(Gln) amidotransferase subunit A (493 aa).

Active-site charge relay system residues include lysine 79 and serine 159. Catalysis depends on serine 183, which acts as the Acyl-ester intermediate.

Belongs to the amidase family. GatA subfamily. Heterotrimer of A, B and C subunits.

It catalyses the reaction L-glutamyl-tRNA(Gln) + L-glutamine + ATP + H2O = L-glutaminyl-tRNA(Gln) + L-glutamate + ADP + phosphate + H(+). Allows the formation of correctly charged Gln-tRNA(Gln) through the transamidation of misacylated Glu-tRNA(Gln) in organisms which lack glutaminyl-tRNA synthetase. The reaction takes place in the presence of glutamine and ATP through an activated gamma-phospho-Glu-tRNA(Gln). This Rhizobium meliloti (strain 1021) (Ensifer meliloti) protein is Glutamyl-tRNA(Gln) amidotransferase subunit A.